The following is a 336-amino-acid chain: D-alanine--D-alanine ligase (336 aa).

In terms of domain architecture, ATP-grasp spans 124–330; that stretch reads KMWFSALGIP…FTEYLSLVIK (207 aa). 154 to 209 contacts ATP; it reads ALENWGSIFVKAASQGSSVGCYKVDDSSKVAGVLKDAFGYAPYVIVEKTIKARELE. Residues aspartate 284, glutamate 297, and asparagine 299 each coordinate Mg(2+).

The protein belongs to the D-alanine--D-alanine ligase family. Mg(2+) serves as cofactor. Requires Mn(2+) as cofactor.

Its subcellular location is the cytoplasm. The catalysed reaction is 2 D-alanine + ATP = D-alanyl-D-alanine + ADP + phosphate + H(+). Its pathway is cell wall biogenesis; peptidoglycan biosynthesis. Functionally, cell wall formation. This chain is D-alanine--D-alanine ligase, found in Shewanella sp. (strain MR-7).